The sequence spans 95 residues: Cliotide T1 (95 aa).

Residues 1-30 (GIPCGESCVFIPCITGAIGCSCKSKVCYRN) constitute a cross-link (cyclopeptide (Gly-Asn)). Cystine bridges form between Cys-4–Cys-20, Cys-8–Cys-22, and Cys-13–Cys-27. A propeptide spans 31-95 (HVIAAEAKTM…KDHLKMSITN (65 aa)) (removed in mature form).

Post-translationally, contains 3 disulfide bonds. In terms of processing, this is a cyclic peptide. In terms of tissue distribution, expressed in flower, stem, shoot, root, leaf, seed, pod and nodule (at protein level).

Its function is as follows. Probably participates in a plant defense mechanism. Active against Gram-negative bacteria E.coli ATCC 700926 (MIC=1.1 uM), K.pneumoniae ATTC 13883 (MIC=2.7 uM) and P.aeruginosa ATCC 39018 (MIC=4.7 uM). Has hemolytic and cytotoxic activity. This is Cliotide T1 from Clitoria ternatea (Butterfly pea).